Reading from the N-terminus, the 88-residue chain is Antitoxin VapB3 (88 aa).

Its function is as follows. Antitoxin component of a type II toxin-antitoxin (TA) system. The sequence is that of Antitoxin VapB3 (vapB3) from Mycobacterium tuberculosis (strain CDC 1551 / Oshkosh).